Here is a 332-residue protein sequence, read N- to C-terminus: DNA-directed RNA polymerase 2A (332 aa).

Residues Asp33, Lys108, and Asp265 contribute to the active site.

It belongs to the phage and mitochondrial RNA polymerase family.

The enzyme catalyses RNA(n) + a ribonucleoside 5'-triphosphate = RNA(n+1) + diphosphate. Functionally, DNA-dependent RNA polymerase catalyzes the transcription of DNA into RNA using the four ribonucleoside triphosphates as substrates. In Nicotiana tabacum (Common tobacco), this protein is DNA-directed RNA polymerase 2A (RPOT2-SYL).